The following is a 231-amino-acid chain: Achaete-scute homolog 1 (231 aa).

Disordered regions lie at residues 1-24 (MESS…FLPP) and 39-92 (AAAA…PELM). Residues 39 to 51 (AAAAAQSAQQQQP) show a composition bias toward low complexity. A compositionally biased stretch (basic residues) spans 76–85 (SAAKQVKRQR). The bHLH domain maps to 113 to 165 (AAVARRNERERNRVKLVNLGFATLREHVPNGAANKKMSKVETLRSAVEYIRAL). Lys-151 is modified (N6-acetyllysine).

In terms of assembly, efficient DNA binding requires dimerization with another bHLH protein. Forms a heterodimer with TCF3. In terms of tissue distribution, developing CNS and PNS at embryonic and postnatal stages. Expressed in the epithelium of glandular stomach.

It is found in the nucleus. Functionally, transcription factor that plays a key role in neuronal differentiation: acts as a pioneer transcription factor, accessing closed chromatin to allow other factors to bind and activate neural pathways. Directly binds the E box motif (5'-CANNTG-3') on promoters and promotes transcription of neuronal genes. The combination of three transcription factors, ASCL1, POU3F2/BRN2 and MYT1L, is sufficient to reprogram fibroblasts and other somatic cells into induced neuronal (iN) cells in vitro. Plays a role at early stages of development of specific neural lineages in most regions of the CNS, and of several lineages in the PNS. Essential for the generation of olfactory and autonomic neurons. Acts synergistically with FOXN4 to specify the identity of V2b neurons rather than V2a from bipotential p2 progenitors during spinal cord neurogenesis, probably through DLL4-NOTCH signaling activation. Involved in the regulation of neuroendocrine cell development in the glandular stomach. This Mus musculus (Mouse) protein is Achaete-scute homolog 1.